Reading from the N-terminus, the 235-residue chain is DnaA regulatory inactivator Hda (235 aa).

Belongs to the DnaA family. HdA subfamily. In terms of assembly, the active form seems to be an ADP-bound monomer. Forms the RIDA complex (regulatory inactivation of DnaA) of ATP-DnaA, ADP-Hda and the DNA-loaded beta sliding clamp (dnaN).

Its function is as follows. Mediates the interaction of DNA replication initiator protein DnaA with DNA polymerase subunit beta sliding clamp (dnaN). Stimulates hydrolysis of ATP-DnaA to ADP-DnaA, rendering DnaA inactive for reinitiation, a process called regulatory inhibition of DnaA or RIDA. This Yersinia pestis bv. Antiqua (strain Antiqua) protein is DnaA regulatory inactivator Hda.